The following is a 328-amino-acid chain: NADH-quinone oxidoreductase subunit H (328 aa).

8 helical membrane-spanning segments follow: residues 8–28, 81–101, 114–134, 154–174, 186–206, 237–257, 265–285, and 304–324; these read VAAI…AVGA, GLFV…FMVI, IGLL…LFAG, LSYE…AGSF, LWFI…GIAV, FFVG…TLFL, LPPI…FILL, and VCLP…LIFS.

It belongs to the complex I subunit 1 family. In terms of assembly, NDH-1 is composed of 14 different subunits. Subunits NuoA, H, J, K, L, M, N constitute the membrane sector of the complex.

The protein resides in the cell inner membrane. The catalysed reaction is a quinone + NADH + 5 H(+)(in) = a quinol + NAD(+) + 4 H(+)(out). Its function is as follows. NDH-1 shuttles electrons from NADH, via FMN and iron-sulfur (Fe-S) centers, to quinones in the respiratory chain. The immediate electron acceptor for the enzyme in this species is believed to be ubiquinone. Couples the redox reaction to proton translocation (for every two electrons transferred, four hydrogen ions are translocated across the cytoplasmic membrane), and thus conserves the redox energy in a proton gradient. This subunit may bind ubiquinone. The chain is NADH-quinone oxidoreductase subunit H from Chromohalobacter salexigens (strain ATCC BAA-138 / DSM 3043 / CIP 106854 / NCIMB 13768 / 1H11).